The primary structure comprises 380 residues: Alanine racemase (380 aa).

Catalysis depends on K34, which acts as the Proton acceptor; specific for D-alanine. K34 carries the N6-(pyridoxal phosphate)lysine modification. R135 lines the substrate pocket. The active-site Proton acceptor; specific for L-alanine is Y267. Residue M315 participates in substrate binding.

The protein belongs to the alanine racemase family. It depends on pyridoxal 5'-phosphate as a cofactor.

It carries out the reaction L-alanine = D-alanine. The protein operates within amino-acid biosynthesis; D-alanine biosynthesis; D-alanine from L-alanine: step 1/1. Catalyzes the interconversion of L-alanine and D-alanine. May also act on other amino acids. The sequence is that of Alanine racemase (alr) from Lawsonia intracellularis (strain PHE/MN1-00).